The sequence spans 685 residues: UvrABC system protein B (685 aa).

Residues 30–188 (DGVLRGDRWQ…QELVSLHYIR (159 aa)) form the Helicase ATP-binding domain. Residue 43–50 (GVTGSGKT) coordinates ATP. Positions 96–119 (YYDFYQPEAYLPALDKYIAKDLRI) match the Beta-hairpin motif. Positions 435–597 (QIDDLLAEIR…ITPRSIRKSL (163 aa)) constitute a Helicase C-terminal domain. Residues 641–676 (YAMVAELRLEMNEAAIQMEYEKAAYLRDEIARLMHG) form the UVR domain.

The protein belongs to the UvrB family. In terms of assembly, forms a heterotetramer with UvrA during the search for lesions. Interacts with UvrC in an incision complex.

Its subcellular location is the cytoplasm. Functionally, the UvrABC repair system catalyzes the recognition and processing of DNA lesions. A damage recognition complex composed of 2 UvrA and 2 UvrB subunits scans DNA for abnormalities. Upon binding of the UvrA(2)B(2) complex to a putative damaged site, the DNA wraps around one UvrB monomer. DNA wrap is dependent on ATP binding by UvrB and probably causes local melting of the DNA helix, facilitating insertion of UvrB beta-hairpin between the DNA strands. Then UvrB probes one DNA strand for the presence of a lesion. If a lesion is found the UvrA subunits dissociate and the UvrB-DNA preincision complex is formed. This complex is subsequently bound by UvrC and the second UvrB is released. If no lesion is found, the DNA wraps around the other UvrB subunit that will check the other stand for damage. This Chlorobium phaeobacteroides (strain DSM 266 / SMG 266 / 2430) protein is UvrABC system protein B.